The primary structure comprises 186 residues: Ribosome-recycling factor (186 aa).

This sequence belongs to the RRF family.

It localises to the cytoplasm. Its function is as follows. Responsible for the release of ribosomes from messenger RNA at the termination of protein biosynthesis. May increase the efficiency of translation by recycling ribosomes from one round of translation to another. This chain is Ribosome-recycling factor, found in Limosilactobacillus reuteri (Lactobacillus reuteri).